The chain runs to 79 residues: Bacteriochlorophyll c-binding protein (79 aa).

His25 contacts a bacteriochlorophyll c.

This sequence belongs to the BChl C/E-binding protein family.

Its subcellular location is the chlorosome. It localises to the chlorosome envelope. Functionally, component of the photosynthetic apparatus. The light harvesting B740 complex binds bacteriochlorophyll c. The sequence is that of Bacteriochlorophyll c-binding protein (csmA) from Chlorobaculum tepidum (strain ATCC 49652 / DSM 12025 / NBRC 103806 / TLS) (Chlorobium tepidum).